The primary structure comprises 334 residues: Gap junction alpha-2 protein (334 aa).

At 1-12 (MAGWELLKLLLD) the chain is on the cytoplasmic side. Residues 13–35 (DVQEHSTLIGKVWLTVLFIFRIF) form a helical membrane-spanning segment. Topologically, residues 36-75 (ILSVAGESVWTDEQSDFICNTQQPGCTNVCYDQAFPISHV) are extracellular. Residues 76–98 (RYWVLQFLFVSTPTLIYLGHMVY) traverse the membrane as a helical segment. Residues 99–153 (LSKKEEKERQKENESRILVANEAQTEVHSSATKKIRIQGPLMCTYTTSVVFKSIF) are Cytoplasmic-facing. The chain crosses the membrane as a helical span at residues 154–176 (EAGFLLGQWYIYGFVMSPIFVCE). At 177–207 (RIPCKHKVECFVSRPMEKTIFIIFMLVVSLI) the chain is on the extracellular side. A helical membrane pass occupies residues 208 to 230 (SLLLNLMELIHLSFKCFQHGIKE). At 231–334 (GATCSPTGIP…HQTSSKQQYV (104 aa)) the chain is on the cytoplasmic side.

The protein belongs to the connexin family. Alpha-type (group II) subfamily. A connexon is composed of a hexamer of connexins. In terms of tissue distribution, resides primarily in the ovary, oocytes and early embryos.

The protein resides in the cell membrane. It is found in the cell junction. It localises to the gap junction. One gap junction consists of a cluster of closely packed pairs of transmembrane channels, the connexons, through which materials of low MW diffuse from one cell to a neighboring cell. This Xenopus laevis (African clawed frog) protein is Gap junction alpha-2 protein (gja2).